A 400-amino-acid polypeptide reads, in one-letter code: CinA-like protein (400 aa).

Belongs to the CinA family.

This chain is CinA-like protein, found in Escherichia coli (strain K12 / MC4100 / BW2952).